Here is a 37-residue protein sequence, read N- to C-terminus: MKVKPSVKPICEKCKIIKRKGKVMVICENPKHKQVQG.

This sequence belongs to the bacterial ribosomal protein bL36 family.

The protein is Large ribosomal subunit protein bL36 of Syntrophomonas wolfei subsp. wolfei (strain DSM 2245B / Goettingen).